A 166-amino-acid chain; its full sequence is NAD(P)H-quinone oxidoreductase subunit I, chloroplastic (166 aa).

4Fe-4S ferredoxin-type domains lie at 55–84 (GRIH…VDWK) and 95–124 (LNYS…MTEE). [4Fe-4S] cluster-binding residues include Cys-64, Cys-67, Cys-70, Cys-74, Cys-104, Cys-107, Cys-110, and Cys-114.

The protein belongs to the complex I 23 kDa subunit family. In terms of assembly, NDH is composed of at least 16 different subunits, 5 of which are encoded in the nucleus. The cofactor is [4Fe-4S] cluster.

It localises to the plastid. The protein resides in the chloroplast thylakoid membrane. It carries out the reaction a plastoquinone + NADH + (n+1) H(+)(in) = a plastoquinol + NAD(+) + n H(+)(out). The catalysed reaction is a plastoquinone + NADPH + (n+1) H(+)(in) = a plastoquinol + NADP(+) + n H(+)(out). NDH shuttles electrons from NAD(P)H:plastoquinone, via FMN and iron-sulfur (Fe-S) centers, to quinones in the photosynthetic chain and possibly in a chloroplast respiratory chain. The immediate electron acceptor for the enzyme in this species is believed to be plastoquinone. Couples the redox reaction to proton translocation, and thus conserves the redox energy in a proton gradient. This chain is NAD(P)H-quinone oxidoreductase subunit I, chloroplastic, found in Guardiola tulocarpus.